A 258-amino-acid polypeptide reads, in one-letter code: Large ribosomal subunit protein bL19m (258 aa).

The disordered stretch occupies residues 235–258; sequence SKGLTGGVGGGGGKQKGQESKKKN. Positions 238 to 249 are enriched in gly residues; it reads LTGGVGGGGGKQ.

The protein belongs to the bacterial ribosomal protein bL19 family. Component of the mitochondrial large ribosomal subunit (mt-LSU). Mature N.crassa 74S mitochondrial ribosomes consist of a small (37S) and a large (54S) subunit. The 37S small subunit contains a 16S ribosomal RNA (16S mt-rRNA) and 32 different proteins. The 54S large subunit contains a 23S rRNA (23S mt-rRNA) and 42 different proteins.

The protein resides in the mitochondrion. Functionally, component of the mitochondrial ribosome (mitoribosome), a dedicated translation machinery responsible for the synthesis of mitochondrial genome-encoded proteins, including at least some of the essential transmembrane subunits of the mitochondrial respiratory chain. The mitoribosomes are attached to the mitochondrial inner membrane and translation products are cotranslationally integrated into the membrane. In Neurospora crassa (strain ATCC 24698 / 74-OR23-1A / CBS 708.71 / DSM 1257 / FGSC 987), this protein is Large ribosomal subunit protein bL19m (img1).